Reading from the N-terminus, the 156-residue chain is Small ribosomal subunit protein uS7 (156 aa).

It belongs to the universal ribosomal protein uS7 family. In terms of assembly, part of the 30S ribosomal subunit. Contacts proteins S9 and S11.

Functionally, one of the primary rRNA binding proteins, it binds directly to 16S rRNA where it nucleates assembly of the head domain of the 30S subunit. Is located at the subunit interface close to the decoding center, probably blocks exit of the E-site tRNA. The sequence is that of Small ribosomal subunit protein uS7 from Ruminiclostridium cellulolyticum (strain ATCC 35319 / DSM 5812 / JCM 6584 / H10) (Clostridium cellulolyticum).